Consider the following 295-residue polypeptide: Fatty acyl-CoA reductase (295 aa).

An NADP(+)-binding site is contributed by 21–28 (TGASSGIG). Substrate is bound at residue Ser153. Catalysis depends on Tyr166, which acts as the Proton acceptor.

The protein belongs to the short-chain dehydrogenases/reductases (SDR) family.

The enzyme catalyses hexadecanal + NADP(+) + CoA = hexadecanoyl-CoA + NADPH + H(+). In terms of biological role, catalyzes the NADPH-dependent reduction of long chain acyl-CoA (with chain lengths of 14 to 22 carbons) to the corresponding aldehyde. The protein is Fatty acyl-CoA reductase (acr1) of Acinetobacter baylyi (strain ATCC 33305 / BD413 / ADP1).